Here is a 601-residue protein sequence, read N- to C-terminus: Probable HECT-type ubiquitin ligase-interacting protein creD (601 aa).

Disordered regions lie at residues 374–397 and 454–496; these read EVDPSGYRTPGPGSGPGTPFGTLS and VSTD…GMAT. Residues 455 to 473 are compositionally biased toward low complexity; the sequence is STDSFGPSSGSNSQSPASP. Basic and acidic residues predominate over residues 475–489; sequence LSRRPSDEGYHDHDY.

Belongs to the arrestin family. As to quaternary structure, interacts with hulA.

Component of the regulatory network controlling carbon source utilization through ubiquitination and deubiquitination involving creA, creB, creC, creD and acrB. May be involved in signaling by recognizing appropriately phosphorylated substrates via its arrestin domains and then recruit a HECT-type ubiquitin ligase such as hulA, leading to ubiquitination of the substrate, providing a link between ubiquitination and phosphorylation in protein regulation and stability. The sequence is that of Probable HECT-type ubiquitin ligase-interacting protein creD (creD) from Aspergillus fumigatus (strain CBS 144.89 / FGSC A1163 / CEA10) (Neosartorya fumigata).